A 223-amino-acid chain; its full sequence is Endonuclease V (223 aa).

Mg(2+)-binding residues include aspartate 35 and aspartate 103.

This sequence belongs to the endonuclease V family. Requires Mg(2+) as cofactor.

The protein localises to the cytoplasm. The enzyme catalyses Endonucleolytic cleavage at apurinic or apyrimidinic sites to products with a 5'-phosphate.. Functionally, DNA repair enzyme involved in the repair of deaminated bases. Selectively cleaves double-stranded DNA at the second phosphodiester bond 3' to a deoxyinosine leaving behind the intact lesion on the nicked DNA. This chain is Endonuclease V, found in Salmonella agona (strain SL483).